We begin with the raw amino-acid sequence, 137 residues long: MIEGIYEVMPEKFNEALKSYLKSTNEVVPLQDHDIMKTGEGREQAPIEEDWYFTRMASIVRQISIKGAVTSEFLAKRYGSLKNRGCRPSKYVGAYPEIGESVLENLKNMGWINEHPKDMLTEKGKTIVREIIEKVRE.

This sequence belongs to the eukaryotic ribosomal protein eS19 family. As to quaternary structure, component of the small ribosomal subunit.

It localises to the cytoplasm. In Encephalitozoon cuniculi (strain GB-M1) (Microsporidian parasite), this protein is Small ribosomal subunit protein eS19 (RPS19).